The primary structure comprises 294 residues: Gap junction delta-3 protein (294 aa).

Residues 1–24 (MGEWAFLGSLLDAVQLQSPLVGRL) lie on the Cytoplasmic side of the membrane. A helical transmembrane segment spans residues 25-45 (WLVVMLIFRILVLATVGGAVF). The Extracellular portion of the chain corresponds to 46–76 (EDEQEEFVCNTLQPGCRQTCYDRAFPVSHYR). Residues 77–97 (FWLFHILLLSAPPVLFVVYSM) traverse the membrane as a helical segment. Residues 98–136 (HRAGKEAGGAEAAAQCAPGLPEAQCAPCALRARRARRCY) lie on the Cytoplasmic side of the membrane. The helical transmembrane segment at 137–157 (LLSVALRLLAELTFLGGQALL) threads the bilayer. Residues 158–188 (YGFRVAPHFACAGPPCPHTVDCFVSRPTEKT) are Extracellular-facing. A helical transmembrane segment spans residues 189-209 (VFVLFYFAVGLLSALLSVAEL). The Cytoplasmic portion of the chain corresponds to 210-294 (GHLLWKGRPR…PATGRRDLAI (85 aa)). The interval 233 to 294 (EAQKLLPPPP…PATGRRDLAI (62 aa)) is disordered. A compositionally biased stretch (pro residues) spans 238 to 250 (LPPPPPPPPPPAL).

It belongs to the connexin family. Delta-type subfamily. A connexon is composed of a hexamer of connexins. Interacts with TJP1. Expressed in vascular smooth muscle cells. Found in heart, colon, and artery (at protein level). Found in cerebral cortex, heart, liver, lung, kidney, spleen and testis.

The protein resides in the cell membrane. Its subcellular location is the cell junction. The protein localises to the gap junction. In terms of biological role, one gap junction consists of a cluster of closely packed pairs of transmembrane channels, the connexons, through which materials of low MW diffuse from one cell to a neighboring cell. The polypeptide is Gap junction delta-3 protein (GJD3) (Homo sapiens (Human)).